A 256-amino-acid polypeptide reads, in one-letter code: Reaction center protein M chain (256 aa).

3 consecutive transmembrane segments (helical) span residues 52 to 78 (PGVA…LASV), 110 to 139 (EGGW…ARAL), and 142 to 167 (GTHM…PLLL). H181 and H201 together coordinate (7R,8Z)-bacteriochlorophyll b. Residues 197 to 225 (YNPFHMLSIAFLYGSAVLFAMHGATILAV) traverse the membrane as a helical segment. Residues H218 and E233 each coordinate Fe cation. Residue W251 participates in a ubiquinone binding.

The protein belongs to the reaction center PufL/M/PsbA/D family. As to quaternary structure, reaction center is composed of four bacteriochlorophylls, two bacteriopheophytins, two ubiquinones, one iron, and two highly hydrophobic polypeptide chains (designated L and M).

It is found in the cellular chromatophore membrane. Its function is as follows. The reaction center is a membrane-bound complex that mediates the initial photochemical event in the electron transfer process of photosynthesis. The chain is Reaction center protein M chain (pufM) from Pararhodospirillum photometricum (Rhodospirillum photometricum).